Reading from the N-terminus, the 721-residue chain is Fatty acid oxidation complex subunit alpha (721 aa).

Residues 1 to 190 are enoyl-CoA hydratase/isomerase; it reads MIYEGKAITV…KVGVVDAIVA (190 aa). Residue Asp297 coordinates substrate. The tract at residues 312–721 is 3-hydroxyacyl-CoA dehydrogenase; sequence RDVKQAAVLG…SFFGQASSEV (410 aa). NAD(+) is bound by residues Met325, Asp344, 401–403, Lys408, and Ser430; that span reads VVE. His451 serves as the catalytic For 3-hydroxyacyl-CoA dehydrogenase activity. Asn454 lines the NAD(+) pocket. 2 residues coordinate substrate: Asn501 and Tyr660.

The protein in the N-terminal section; belongs to the enoyl-CoA hydratase/isomerase family. In the C-terminal section; belongs to the 3-hydroxyacyl-CoA dehydrogenase family. In terms of assembly, heterotetramer of two alpha chains (FadB) and two beta chains (FadA).

The enzyme catalyses a (3S)-3-hydroxyacyl-CoA + NAD(+) = a 3-oxoacyl-CoA + NADH + H(+). The catalysed reaction is a (3S)-3-hydroxyacyl-CoA = a (2E)-enoyl-CoA + H2O. It catalyses the reaction a 4-saturated-(3S)-3-hydroxyacyl-CoA = a (3E)-enoyl-CoA + H2O. It carries out the reaction (3S)-3-hydroxybutanoyl-CoA = (3R)-3-hydroxybutanoyl-CoA. The enzyme catalyses a (3Z)-enoyl-CoA = a 4-saturated (2E)-enoyl-CoA. The catalysed reaction is a (3E)-enoyl-CoA = a 4-saturated (2E)-enoyl-CoA. It participates in lipid metabolism; fatty acid beta-oxidation. Involved in the aerobic and anaerobic degradation of long-chain fatty acids via beta-oxidation cycle. Catalyzes the formation of 3-oxoacyl-CoA from enoyl-CoA via L-3-hydroxyacyl-CoA. It can also use D-3-hydroxyacyl-CoA and cis-3-enoyl-CoA as substrate. The chain is Fatty acid oxidation complex subunit alpha from Pseudomonas syringae pv. tomato (strain ATCC BAA-871 / DC3000).